The sequence spans 209 residues: Large ribosomal subunit protein uL4 (209 aa).

Positions 46–71 (GTSSTKTRSEVRGSSKKPWKQKGTGR) are disordered. Residues 59–71 (SSKKPWKQKGTGR) are compositionally biased toward basic residues.

This sequence belongs to the universal ribosomal protein uL4 family. As to quaternary structure, part of the 50S ribosomal subunit.

Functionally, one of the primary rRNA binding proteins, this protein initially binds near the 5'-end of the 23S rRNA. It is important during the early stages of 50S assembly. It makes multiple contacts with different domains of the 23S rRNA in the assembled 50S subunit and ribosome. Forms part of the polypeptide exit tunnel. The protein is Large ribosomal subunit protein uL4 of Borrelia garinii subsp. bavariensis (strain ATCC BAA-2496 / DSM 23469 / PBi) (Borreliella bavariensis).